Reading from the N-terminus, the 418-residue chain is Cytochrome P450 monooxygenase ABA2 (418 aa).

A heme-binding site is contributed by cysteine 355.

Belongs to the cytochrome P450 family. Heme is required as a cofactor.

Its pathway is hormone biosynthesis. In terms of biological role, cytochrome P450 monooxygenase involved in the biosynthesis of abscisic acid (ABA), a phytohormone that acts antagonistically toward salicylic acid (SA), jasmonic acid (JA) and ethylene (ETH) signaling, to impede plant defense responses. During pathogen-host interaction, ABA plays a dual role in disease severity by increasing plant susceptibility and accelerating pathogenesis in the fungus itself. The first step of the pathway catalyzes the reaction from farnesyl diphosphate to alpha-ionylideneethane performed by the alpha-ionylideneethane synthase ABA3 via a three-step reaction mechanism involving 2 neutral intermediates, beta-farnesene and allofarnesene. The cytochrome P450 monooxygenase ABA1 might then be involved in the conversion of alpha-ionylideneethane to alpha-ionylideneacetic acid. Alpha-ionylideneacetic acid is further converted to abscisic acid in 2 steps involving the cytochrome P450 monooxygenase ABA2 and the short-chain dehydrogenase/reductase ABA4, via the intermediates 1'-deoxy-ABA or 1',4'-trans-diol-ABA, depending on the order of action of these 2 enzymes. ABA2 is responsible for the hydroxylation of carbon atom C-1' and ABA4 might be involved in the oxidation of the C-4' carbon atom. The protein is Cytochrome P450 monooxygenase ABA2 of Pyricularia oryzae (strain Y34) (Rice blast fungus).